The sequence spans 318 residues: 1-aminocyclopropane-1-carboxylate oxidase 1 (318 aa).

A Fe2OG dioxygenase domain is found at 153–254; sequence PTFGTKVSNY…RMSIASFYNP (102 aa). His-177, Asp-179, and His-234 together coordinate Fe cation.

The protein belongs to the iron/ascorbate-dependent oxidoreductase family. The cofactor is Fe cation. As to expression, fruit.

The catalysed reaction is 1-aminocyclopropane-1-carboxylate + L-ascorbate + O2 = ethene + L-dehydroascorbate + hydrogen cyanide + CO2 + 2 H2O. It functions in the pathway alkene biosynthesis; ethylene biosynthesis via S-adenosyl-L-methionine; ethylene from S-adenosyl-L-methionine: step 2/2. This chain is 1-aminocyclopropane-1-carboxylate oxidase 1 (ACO1), found in Cucumis melo (Muskmelon).